The primary structure comprises 426 residues: MADKEVYDDAVEERVINEEYKIWKKNTPFLYDLVMTHALEWPSLTVQWLPDVNRPEGKDYVVHRLVLGTHTSDEQNHLVIASAQIPNDDAQFDASHYDSEKGAEFGGFGSVSGKIEIEIKINHEGEVNRARYMPQNPCIIATKTPTSDVLAFDYTKHPSKPDPSGDCSPDLRLRGHQKEGYGLSWNPNLSGNLLSASDDHTICLWDISGAPKEGKIVDAKTIFTGHTAVVEDVSWHLLHESLFGSVADDQKLMIWDTRSNNTSKPSHSVDAHTAEVNCLSFNPYSEFILATGSADKTVALWDLRNLKLKLHSFESHKDEIFQVQWSPHNETILASSGTDRRLNVWDLSKIGEEQSAEDAEDGPPELLFIHGGHTAKISDFSWNPNEPWVICSVSEDNIMQVWQMAENIYNDEEPDTPASELEGQAS.

7 WD repeats span residues 47–123 (QWLP…KINH), 129–174 (RARY…LRLR), 182–218 (GLSW…KIVD), 229–270 (VVED…HSVD), 276–313 (VNCL…LHSF), 319–370 (EIFQ…LFIH), and 377–404 (ISDF…VWQM).

Belongs to the WD repeat RBAP46/RBAP48/MSI1 family. As to quaternary structure, binds directly to helix 1 of the histone fold of histone H4, a region that is not accessible when H4 is in chromatin.

It is found in the nucleus. Core histone-binding subunit that may target chromatin remodeling factors, histone acetyltransferases and histone deacetylases to their histone substrates in a manner that is regulated by nucleosomal DNA. Component of several complexes which regulate chromatin metabolism. The sequence is that of Histone-binding protein RBBP7 (rbbp7) from Danio rerio (Zebrafish).